The following is a 448-amino-acid chain: Probable metal transport system membrane protein CPn_0347/CP_0413/CPj0347/CpB0354 (448 aa).

A run of 8 helical transmembrane segments spans residues 15–35 (FLAVTLICMTTALWGTILLIS), 47–67 (ASYPGLLVGALMAQYVFSLQA), 69–89 (IFWIVLFGCAASVFGYGIIVF), 100–120 (SALCFVLVVFFAIGVILASYV), 144–164 (FLEATLAAIVFCASLFALWWW), 193–213 (LIFISLVIVSGVRSVGIVLIS), 233–253 (ILILSAFFGGISGALGSYISV), and 270–290 (LPTGPLVVICAGLLAGLCLLF).

Belongs to the ABC-3 integral membrane protein family.

It localises to the cell inner membrane. Functionally, part of an ATP-driven transport system CPn_0346/CPn_0347/CPn_0348/CPn_0349 for a metal. The chain is Probable metal transport system membrane protein CPn_0347/CP_0413/CPj0347/CpB0354 from Chlamydia pneumoniae (Chlamydophila pneumoniae).